Here is a 117-residue protein sequence, read N- to C-terminus: Large ribosomal subunit protein eL18 (117 aa).

It belongs to the eukaryotic ribosomal protein eL18 family.

This Archaeoglobus fulgidus (strain ATCC 49558 / DSM 4304 / JCM 9628 / NBRC 100126 / VC-16) protein is Large ribosomal subunit protein eL18.